The sequence spans 256 residues: Hydroxyethylthiazole kinase (256 aa).

Substrate is bound at residue methionine 37. Residues lysine 113 and threonine 159 each coordinate ATP. Glycine 186 lines the substrate pocket.

This sequence belongs to the Thz kinase family. Requires Mg(2+) as cofactor.

The catalysed reaction is 5-(2-hydroxyethyl)-4-methylthiazole + ATP = 4-methyl-5-(2-phosphooxyethyl)-thiazole + ADP + H(+). The protein operates within cofactor biosynthesis; thiamine diphosphate biosynthesis; 4-methyl-5-(2-phosphoethyl)-thiazole from 5-(2-hydroxyethyl)-4-methylthiazole: step 1/1. Functionally, catalyzes the phosphorylation of the hydroxyl group of 4-methyl-5-beta-hydroxyethylthiazole (THZ). In Exiguobacterium sibiricum (strain DSM 17290 / CCUG 55495 / CIP 109462 / JCM 13490 / 255-15), this protein is Hydroxyethylthiazole kinase.